Consider the following 469-residue polypeptide: uncharacterized protein (469 aa).

This is an uncharacterized protein from Treponema pallidum (strain Nichols).